We begin with the raw amino-acid sequence, 426 residues long: Antigen EM13 (426 aa).

Residues 1–240 (MIQERADIEK…TVAKVDADAD (240 aa)) enclose the F-BAR domain. Disordered stretches follow at residues 287–315 (LTSL…ISTS) and 350–369 (ISKE…FVDD). Polar residues predominate over residues 305–315 (TTDSGSNISTS). The region spanning 371–426 (RPGVPIRALYDYVGVEADELSFNSGDLFEKLEDEDEQGWCKGRKDGRVGLYPRQLR) is the SH3 domain.

This chain is Antigen EM13 (EM13), found in Echinococcus multilocularis (Fox tapeworm).